The chain runs to 750 residues: Photosystem I P700 chlorophyll a apoprotein A1 (750 aa).

8 helical membrane passes run 70–93 (VFSAHFGQLSIIFLWLSGMYFHGA), 156–179 (LYCTAIGALVFAALMLFAGWFHYH), 195–219 (LNHHLAGLLGLGSLSWAGHQVHVSL), 291–309 (IAHHHLAIAILFLIAGHMY), 346–369 (WHAQLALNLAMLGSLTIVVAHHMY), 385–411 (LSLFTHHMWIGGFLIVGAAAHAAIFMV), 433–455 (AIISHLNWVCIFLGFHSFGLYIH), and 531–549 (FLVHHIHAFTIHVTVLILL). [4Fe-4S] cluster is bound by residues Cys-573 and Cys-582. The next 2 membrane-spanning stretches (helical) occupy residues 589–610 (HVFLGLFWMYNAISVVIFHFSW) and 664–686 (LSAYGLFFLGAHFVWAFSLMFLF). His-675 contacts chlorophyll a'. Residues Met-683 and Tyr-691 each coordinate chlorophyll a. Trp-692 contacts phylloquinone. Residues 724–744 (AVGVTHYLLGGIATTWAFFLA) traverse the membrane as a helical segment.

This sequence belongs to the PsaA/PsaB family. In terms of assembly, the PsaA/B heterodimer binds the P700 chlorophyll special pair and subsequent electron acceptors. PSI consists of a core antenna complex that captures photons, and an electron transfer chain that converts photonic excitation into a charge separation. The eukaryotic PSI reaction center is composed of at least 11 subunits. P700 is a chlorophyll a/chlorophyll a' dimer, A0 is one or more chlorophyll a, A1 is one or both phylloquinones and FX is a shared 4Fe-4S iron-sulfur center. is required as a cofactor.

It is found in the plastid. Its subcellular location is the chloroplast thylakoid membrane. It carries out the reaction reduced [plastocyanin] + hnu + oxidized [2Fe-2S]-[ferredoxin] = oxidized [plastocyanin] + reduced [2Fe-2S]-[ferredoxin]. In terms of biological role, psaA and PsaB bind P700, the primary electron donor of photosystem I (PSI), as well as the electron acceptors A0, A1 and FX. PSI is a plastocyanin-ferredoxin oxidoreductase, converting photonic excitation into a charge separation, which transfers an electron from the donor P700 chlorophyll pair to the spectroscopically characterized acceptors A0, A1, FX, FA and FB in turn. Oxidized P700 is reduced on the lumenal side of the thylakoid membrane by plastocyanin. The polypeptide is Photosystem I P700 chlorophyll a apoprotein A1 (Nymphaea alba (White water-lily)).